We begin with the raw amino-acid sequence, 359 residues long: 3-dehydroquinate synthase (359 aa).

NAD(+)-binding positions include 72 to 77 (EGEIHK), 106 to 110 (GVIGD), 130 to 131 (TS), K143, K152, and 170 to 173 (CLKT). The Zn(2+) site is built by E185, H248, and H264.

It belongs to the sugar phosphate cyclases superfamily. Dehydroquinate synthase family. It depends on Co(2+) as a cofactor. Requires Zn(2+) as cofactor. The cofactor is NAD(+).

The protein resides in the cytoplasm. It carries out the reaction 7-phospho-2-dehydro-3-deoxy-D-arabino-heptonate = 3-dehydroquinate + phosphate. It participates in metabolic intermediate biosynthesis; chorismate biosynthesis; chorismate from D-erythrose 4-phosphate and phosphoenolpyruvate: step 2/7. Its function is as follows. Catalyzes the conversion of 3-deoxy-D-arabino-heptulosonate 7-phosphate (DAHP) to dehydroquinate (DHQ). The polypeptide is 3-dehydroquinate synthase (Dehalococcoides mccartyi (strain ATCC BAA-2100 / JCM 16839 / KCTC 5957 / BAV1)).